An 89-amino-acid chain; its full sequence is Long neurotoxin 1 (89 aa).

An N-terminal signal peptide occupies residues 1–21 (MKTLLLTLVVVTIVCLDLGDS). 4 cysteine pairs are disulfide-bonded: Cys24–Cys41, Cys34–Cys58, Cys62–Cys74, and Cys75–Cys80.

The protein belongs to the three-finger toxin family. Long-chain subfamily. Type II alpha-neurotoxin sub-subfamily. Expressed by the venom gland.

It is found in the secreted. Binds with high affinity to muscular (alpha-1/CHRNA1) and neuronal (alpha-7/CHRNA7) nicotinic acetylcholine receptor (nAChR) and inhibits acetylcholine from binding to the receptor, thereby impairing neuromuscular and neuronal transmission. The protein is Long neurotoxin 1 of Pseudonaja textilis (Eastern brown snake).